Reading from the N-terminus, the 635-residue chain is DNA mismatch repair protein MutL (635 aa).

The interval 352 to 380 (KAALQRGWVPPGAGRPGEGGGRAAPPPWR) is disordered.

It belongs to the DNA mismatch repair MutL/HexB family.

Its function is as follows. This protein is involved in the repair of mismatches in DNA. It is required for dam-dependent methyl-directed DNA mismatch repair. May act as a 'molecular matchmaker', a protein that promotes the formation of a stable complex between two or more DNA-binding proteins in an ATP-dependent manner without itself being part of a final effector complex. This chain is DNA mismatch repair protein MutL, found in Symbiobacterium thermophilum (strain DSM 24528 / JCM 14929 / IAM 14863 / T).